The primary structure comprises 307 residues: Ribonuclease H2 subunit B (307 aa).

Ala2 carries the post-translational modification N-acetylalanine. Residue Lys291 is modified to N6-acetyllysine. Residue Ser292 is modified to Phosphoserine.

The protein belongs to the RNase H2 subunit B family. In terms of assembly, the RNase H2 complex is a heterotrimer composed of the catalytic subunit RNASEH2A and the non-catalytic subunits RNASEH2B and RNASEH2C.

It is found in the nucleus. Its function is as follows. Non catalytic subunit of RNase H2, an endonuclease that specifically degrades the RNA of RNA:DNA hybrids. Participates in DNA replication, possibly by mediating the removal of lagging-strand Okazaki fragment RNA primers during DNA replication. Mediates the excision of single ribonucleotides from DNA:RNA duplexes. This chain is Ribonuclease H2 subunit B (Rnaseh2b), found in Rattus norvegicus (Rat).